We begin with the raw amino-acid sequence, 268 residues long: tRNA pseudouridine synthase A (268 aa).

The Nucleophile role is filled by Asp-52. Tyr-110 is a binding site for substrate.

Belongs to the tRNA pseudouridine synthase TruA family. As to quaternary structure, homodimer.

The catalysed reaction is uridine(38/39/40) in tRNA = pseudouridine(38/39/40) in tRNA. Formation of pseudouridine at positions 38, 39 and 40 in the anticodon stem and loop of transfer RNAs. This Prochlorococcus marinus (strain MIT 9301) protein is tRNA pseudouridine synthase A.